A 512-amino-acid chain; its full sequence is MNSKDSNTVPVYTTNTGCPIFNPMAAARVGKGGPVLLQDSHLIDVFQHFDRERIPERVVHAKGSGAFGEFECTDDITKYTKHTMFSKVGKKTPMVARFSTVGGERGTPDTARDPRGFALKFYTDEGIFDMVGNNTPVFFLRDPAKFPLFIHTQKRNPQNDMKDATMFWDYLSQNAESIHQVMILFSDLGGTPYSYRFMDGFSSHTYKFVNDKGEFYYCKWHFITNQGTKGLTNEEAAALDGSNPDHARQDLFEAIERGDYPSWTLYVQVMTPQEAEKYRYNIFDLTKVWPHKDVPMQRVGRFTLNQNPTNFFADIEQAGFSPSHMVPGIEVSADPVLQVRTFSYPDTHRHRLGANFEQIPVNSPKCPVFNYSRDGPMNVNGNQGNWPNYPSSIRPLAKVQYEPDEGHEKWVGQVTYHMDEITDVDFEQPRAFWQNVLGKKPGQQDNFVKNVAGHLSGAISPVRERQYGVFTRVDSELGRRIREATEAEVKKMEEKAPKPINKGEPHMFQGSS.

Residues histidine 60 and asparagine 133 contribute to the active site. Residue tyrosine 344 coordinates heme. A Phosphoserine modification is found at serine 363. The span at glutamate 488–proline 505 shows a compositional bias: basic and acidic residues. Positions glutamate 488–serine 512 are disordered.

Belongs to the catalase family. The cofactor is heme.

The protein resides in the peroxisome matrix. The enzyme catalyses 2 H2O2 = O2 + 2 H2O. Catalyzes the degradation of hydrogen peroxide (H(2)O(2)) generated by peroxisomal oxidases to water and oxygen, thereby protecting cells from the toxic effects of hydrogen peroxide. The polypeptide is Catalase (cta1) (Schizosaccharomyces pombe (strain 972 / ATCC 24843) (Fission yeast)).